The primary structure comprises 345 residues: uncharacterized protein (345 aa).

The segment covering 1 to 13 (MSKPNTETISVNI) has biased composition (polar residues). The tract at residues 1-23 (MSKPNTETISVNIPESEGVPLPD) is disordered. Positions 283-316 (SLKQRTNILKKQGETLKKNVEDINKDTSNLKRHA) form a coiled coil.

The protein resides in the virion. This is an uncharacterized protein from Acanthamoeba polyphaga mimivirus (APMV).